Consider the following 135-residue polypeptide: Calcium-binding protein KIC (135 aa).

The region spanning 74–109 is the EF-hand domain; the sequence is MSKEDAQGMVREGDLDGDGALNQTEFCVLMVRLSPE. Positions 87, 89, 91, and 98 each coordinate Ca(2+).

As to quaternary structure, interacts with KCBP (via C-terminus). KIC and calmodulin show competitive binding to KCBP. Interacts with CML42. Binds to ABCG36. As to expression, expressed in stems, leaves and flowers.

Its function is as follows. Calcium-binding regulatory protein that interacts with kinesin motor protein KCBP in a calcium-dependent manner. Inhibits KCBP microtubule binding activity and microtubule-stimulated ATPase activity. Involved in the regulation of trichome branching through its interaction with KCBP. This Arabidopsis thaliana (Mouse-ear cress) protein is Calcium-binding protein KIC.